A 204-amino-acid chain; its full sequence is Ancillary SecYEG translocon subunit (204 aa).

Over 1 to 23 (MAYTIEEEQELTAIKAWWNENYK) the chain is Cytoplasmic. The chain crosses the membrane as a helical span at residues 24–44 (FIIVCFVIAFGGVFGWNYWQS). At 45-204 (HQIQKMHKAS…QLIQVRLNNL (160 aa)) the chain is on the periplasmic side.

It belongs to the YfgM family. Interacts with the SecYEG translocon. Forms a complex with PpiD.

Its subcellular location is the cell inner membrane. In terms of biological role, may mediate protein transfer from the SecYEG translocon to the periplasmic chaperone network via its periplasmic C-terminal region. This is Ancillary SecYEG translocon subunit (1057) from Aggregatibacter actinomycetemcomitans (Actinobacillus actinomycetemcomitans).